Consider the following 305-residue polypeptide: Nucleotide-binding protein Rxyl_2009 (305 aa).

24–31 (GLSGAGKS) serves as a coordination point for ATP. 75–78 (DIRG) is a GTP binding site.

It belongs to the RapZ-like family.

In terms of biological role, displays ATPase and GTPase activities. The polypeptide is Nucleotide-binding protein Rxyl_2009 (Rubrobacter xylanophilus (strain DSM 9941 / JCM 11954 / NBRC 16129 / PRD-1)).